The sequence spans 423 residues: MTDLLSRAHADALDAADPLRSLRDAFVFPQHGDRDQTYLVGNSLGLQPRAARAMVDEVLDQWGTLGVEGHFTGPTQWLTYHQLVRDALARVVGAQPGEVVAMNTLSVNLHLMMASFYRPTHERGAILIEAGAFPSDRHAVESQLRLRGLDPATHLIEVEADEPNGTLSMAAIADAIAQHGPRLALVLWPGIQYRTGQAFDLAEIVRLARAQGAAVGCDLAHAVGNIPLTLHDDGVDFAVWCNYKYLNAGPGAVGGCFVHERHANSDLPRIAGWWGHEQQTRFRMDPQFVPSPGAEGWQLSNPPVLALAPLRASLALFDQTGMAALRAKSERLTGHLEQLIHARVPQVLQIVTPAEPMRRGCQLSLRVAGGRAQGCSLFEHLHAAGVLGDWREPDLIRIAPVPLYNRFSDLHTFVGQVEAWAAA.

Residues L105, S106, 133–136 (FPSD), D218, H221, and Y243 each bind pyridoxal 5'-phosphate. An N6-(pyridoxal phosphate)lysine modification is found at K244. Pyridoxal 5'-phosphate contacts are provided by W273 and N301.

This sequence belongs to the kynureninase family. In terms of assembly, homodimer. Requires pyridoxal 5'-phosphate as cofactor.

The catalysed reaction is L-kynurenine + H2O = anthranilate + L-alanine + H(+). It catalyses the reaction 3-hydroxy-L-kynurenine + H2O = 3-hydroxyanthranilate + L-alanine + H(+). The protein operates within amino-acid degradation; L-kynurenine degradation; L-alanine and anthranilate from L-kynurenine: step 1/1. It functions in the pathway cofactor biosynthesis; NAD(+) biosynthesis; quinolinate from L-kynurenine: step 2/3. Functionally, catalyzes the cleavage of L-kynurenine (L-Kyn) and L-3-hydroxykynurenine (L-3OHKyn) into anthranilic acid (AA) and 3-hydroxyanthranilic acid (3-OHAA), respectively. The chain is Kynureninase from Xanthomonas oryzae pv. oryzae (strain MAFF 311018).